Reading from the N-terminus, the 52-residue chain is UPF0057 membrane protein At1g57550 (52 aa).

Helical transmembrane passes span 4–24 and 30–50; these read FLEV…RYGL and VCLL…IYVL.

This sequence belongs to the UPF0057 (PMP3) family.

It localises to the membrane. The polypeptide is UPF0057 membrane protein At1g57550 (Arabidopsis thaliana (Mouse-ear cress)).